The chain runs to 105 residues: Large ribosomal subunit protein uL24 (105 aa).

The segment at 40–61 (RIKKHTPQSANERGASSGGIVT) is disordered.

This sequence belongs to the universal ribosomal protein uL24 family. In terms of assembly, part of the 50S ribosomal subunit.

One of two assembly initiator proteins, it binds directly to the 5'-end of the 23S rRNA, where it nucleates assembly of the 50S subunit. Its function is as follows. One of the proteins that surrounds the polypeptide exit tunnel on the outside of the subunit. This chain is Large ribosomal subunit protein uL24, found in Mycobacteroides abscessus (strain ATCC 19977 / DSM 44196 / CCUG 20993 / CIP 104536 / JCM 13569 / NCTC 13031 / TMC 1543 / L948) (Mycobacterium abscessus).